The primary structure comprises 108 residues: Protein SMALL AUXIN UP-REGULATED RNA 8 (108 aa).

The protein belongs to the ARG7 family. As to expression, expressed in seedlings, leaves and flowers.

The protein localises to the cell membrane. In terms of biological role, provide a mechanistic link between auxin and plasma membrane H(+)-ATPases (PM H(+)-ATPases, e.g. AHA1 and AHA2), and triggers PM H(+)-ATPases activity by promoting phosphorylation of their C-terminal autoinhibitory domain as a result of PP2C-D subfamily of type 2C phosphatases inhibition, thus leading to the acidification of the apoplast and the facilitation of solutes and water uptake to drive cell expansion. Triggers plant growth probably by promoting cell elongation. Regulates branch angles and bending. In Arabidopsis thaliana (Mouse-ear cress), this protein is Protein SMALL AUXIN UP-REGULATED RNA 8.